The primary structure comprises 202 residues: IMP cyclohydrolase (202 aa).

The protein belongs to the archaeal IMP cyclohydrolase family.

The catalysed reaction is IMP + H2O = 5-formamido-1-(5-phospho-D-ribosyl)imidazole-4-carboxamide. Its pathway is purine metabolism; IMP biosynthesis via de novo pathway; IMP from 5-formamido-1-(5-phospho-D-ribosyl)imidazole-4-carboxamide: step 1/1. Its function is as follows. Catalyzes the cyclization of 5-formylamidoimidazole-4-carboxamide ribonucleotide to IMP. This is IMP cyclohydrolase (purO) from Methanocaldococcus jannaschii (strain ATCC 43067 / DSM 2661 / JAL-1 / JCM 10045 / NBRC 100440) (Methanococcus jannaschii).